Here is a 429-residue protein sequence, read N- to C-terminus: Histidine--tRNA ligase (429 aa).

This sequence belongs to the class-II aminoacyl-tRNA synthetase family. As to quaternary structure, homodimer.

It localises to the cytoplasm. The catalysed reaction is tRNA(His) + L-histidine + ATP = L-histidyl-tRNA(His) + AMP + diphosphate + H(+). The sequence is that of Histidine--tRNA ligase from Streptococcus pneumoniae serotype 19F (strain G54).